Here is a 114-residue protein sequence, read N- to C-terminus: Small nuclear ribonucleoprotein SmD1a (114 aa).

The Sm domain occupies 2–74; the sequence is KLVRFLMKLN…IRYYILPDSL (73 aa). The disordered stretch occupies residues 87–114; it reads VKPKKPVAGKAVGRGRGRGRGRGRGRGR. Tandem repeats lie at residues 99–100, 101–102, 103–104, 105–106, 107–108, 109–110, 111–112, and 113–114. The interval 99–114 is 8 X 2 AA tandem repeats of G-R; that stretch reads GRGRGRGRGRGRGRGR.

This sequence belongs to the snRNP core protein family.

Its subcellular location is the nucleus. It is found in the nucleus speckle. It localises to the nucleolus. Involved in splicing regulation. Facilitates post-transcriptional gene silencing (PTGS) by limiting the degradation of transgene aberrant RNAs by the RNA quality control (RQC) machinery, thus favoring their entry into cytoplasmic siRNA bodies where they can trigger PTGS. Does not participate in the production of small RNAs. In Arabidopsis thaliana (Mouse-ear cress), this protein is Small nuclear ribonucleoprotein SmD1a.